The chain runs to 408 residues: Repulsive guidance molecule B homolog drag-1 (408 aa).

The signal sequence occupies residues 1 to 22 (MSIVYLVSITFIFSVFKPITSC). The Extracellular segment spans residues 23–387 (RVEECAAWFQ…SEIFKKCIPS (365 aa)). Asn60, Asn134, Asn183, and Asn376 each carry an N-linked (GlcNAc...) asparagine glycan. Residues 388–408 (KSIRFYPFLAIFFFALLSLLC) form a helical membrane-spanning segment.

Belongs to the repulsive guidance molecule (RGM) family. As to quaternary structure, interacts with unc-40 (via FN6 domain), dbl-1 and sma-6. In terms of tissue distribution, expressed in pharyngeal, hypodermal and intestinal cells.

It localises to the cell membrane. In terms of biological role, probably in association with the cell surface receptor unc-40, positively modulates the BMP-like Sma/Mab signaling pathway through interaction with both the ligand dbl-1 and its type I receptor sma-6. Regulates body size and this may be through modulation of the Sma/Mab signaling pathway. The protein is Repulsive guidance molecule B homolog drag-1 of Caenorhabditis elegans.